We begin with the raw amino-acid sequence, 290 residues long: Probable endonuclease 4 (290 aa).

9 residues coordinate Zn(2+): H66, H106, E143, D179, H182, H216, D229, H231, and E261.

This sequence belongs to the AP endonuclease 2 family. Zn(2+) is required as a cofactor.

The enzyme catalyses Endonucleolytic cleavage to 5'-phosphooligonucleotide end-products.. Endonuclease IV plays a role in DNA repair. It cleaves phosphodiester bonds at apurinic or apyrimidinic (AP) sites, generating a 3'-hydroxyl group and a 5'-terminal sugar phosphate. The polypeptide is Probable endonuclease 4 (Solibacter usitatus (strain Ellin6076)).